The chain runs to 622 residues: Dynein axonemal assembly factor 1 (622 aa).

The interval 1–80 (MHPEVSEPQA…ARNDRDDRGP (80 aa)) is disordered. Positions 22–42 (AGDHGRAGPGVRKEEINETKE) are enriched in basic and acidic residues. Over residues 48-59 (STTSCQSQKQQS) the composition is skewed to low complexity. Residues 62–80 (SRLDCRSGYARNDRDDRGP) show a composition bias toward basic and acidic residues. LRR repeat units follow at residues 101-123 (ALNDTLYLHFKGFDRIENLEEYT), 124-145 (GLRCLWLECNGIQRIENLQAQS), 146-167 (ELRCLFLQVNLLHKIENLEPLQ), 168-189 (KLDALNLSNNYIKTIENLSCLP), 190-211 (VLNTLQMAHNRLETVADIQHLR), and 215-236 (RLCVLDLSHNMLSDPEILSVLE). Residues 249 to 288 (NPVTKHIPNYRRTVTVRLKQLTYLDDRPVFPKDRACAEAW) form the LRRCT domain. The segment covering 326 to 336 (EERKKARDKGE) has biased composition (basic and acidic residues). Residues 326-360 (EERKKARDKGETPLPDSEESSSTSPEAQDKPPLGE) form a disordered region. Positions 337-351 (TPLPDSEESSSTSPE) are enriched in low complexity. Ser349, Ser464, and Ser487 each carry phosphoserine. 2 disordered regions span residues 481–503 (SSLSDDSDPELNDSPLPMLEHTP) and 540–622 (LETQ…FGLD). The span at 540 to 550 (LETQGQVFSTT) shows a compositional bias: polar residues.

This sequence belongs to the DNAAF1 family.

The protein resides in the cell projection. It is found in the cilium. Cilium-specific protein required for the stability of the ciliary architecture. Plays a role in cytoplasmic preassembly of dynein arms. Involved in regulation of microtubule-based cilia and actin-based brush border microvilli. The protein is Dynein axonemal assembly factor 1 (Dnaaf1) of Peromyscus leucopus (White-footed mouse).